We begin with the raw amino-acid sequence, 217 residues long: Probable transaldolase (217 aa).

Residue K83 is the Schiff-base intermediate with substrate of the active site.

This sequence belongs to the transaldolase family. Type 3B subfamily.

It is found in the cytoplasm. It carries out the reaction D-sedoheptulose 7-phosphate + D-glyceraldehyde 3-phosphate = D-erythrose 4-phosphate + beta-D-fructose 6-phosphate. It participates in carbohydrate degradation; pentose phosphate pathway; D-glyceraldehyde 3-phosphate and beta-D-fructose 6-phosphate from D-ribose 5-phosphate and D-xylulose 5-phosphate (non-oxidative stage): step 2/3. Functionally, transaldolase is important for the balance of metabolites in the pentose-phosphate pathway. This chain is Probable transaldolase, found in Anaeromyxobacter dehalogenans (strain 2CP-C).